A 218-amino-acid polypeptide reads, in one-letter code: Adenylate kinase (218 aa).

10-15 (GAGKGT) contributes to the ATP binding site. The tract at residues 30-59 (STGDMLRAAIAKGTPLGLSAQKIMESGGLV) is NMP. Residues threonine 31, arginine 36, 57–59 (GLV), 85–88 (GFPR), and glutamine 92 each bind AMP. Residues 122-159 (GRRIHQPSGRVYHVVNQPPKNPGVDDITGEPLIQRDDD) form an LID region. ATP is bound by residues arginine 123 and 132 to 133 (VY). Positions 156 and 167 each coordinate AMP. Glycine 203 contributes to the ATP binding site.

The protein belongs to the adenylate kinase family. As to quaternary structure, monomer.

It is found in the cytoplasm. It carries out the reaction AMP + ATP = 2 ADP. It participates in purine metabolism; AMP biosynthesis via salvage pathway; AMP from ADP: step 1/1. In terms of biological role, catalyzes the reversible transfer of the terminal phosphate group between ATP and AMP. Plays an important role in cellular energy homeostasis and in adenine nucleotide metabolism. In Legionella pneumophila (strain Lens), this protein is Adenylate kinase.